We begin with the raw amino-acid sequence, 403 residues long: Tripartite motif-containing protein 59 (403 aa).

The segment at 10–60 (CPICYSIFEDPRVLPCSHTFCRNCLENVLQASGNFYIWRPLRIPLKCPNCR) adopts an RING-type zinc-finger fold. Residues 92-134 (PDVVTCPEHYRQPLNVYCLLDKKLVCGHCLTIGQHHGHPIDDL) form a B box-type zinc finger. Residues Cys-97, His-100, Cys-120, and His-126 each coordinate Zn(2+). Residues 163–246 (LIEKLEEQKC…TITTSLQDES (84 aa)) are a coiled coil. Residues 329-349 (ILNIAIVSLISVILMLILLFN) form a helical membrane-spanning segment.

This sequence belongs to the TRIM/RBCC family. In terms of assembly, interacts with ECSIT. In terms of tissue distribution, moderately expressed in the spleen, brain and heart and very highly expressed in the testis.

It is found in the endoplasmic reticulum membrane. It catalyses the reaction S-ubiquitinyl-[E2 ubiquitin-conjugating enzyme]-L-cysteine + [acceptor protein]-L-lysine = [E2 ubiquitin-conjugating enzyme]-L-cysteine + N(6)-ubiquitinyl-[acceptor protein]-L-lysine.. It participates in protein modification; protein ubiquitination. Its function is as follows. E3 ubiquitin ligase involved in different processes such as development and immune response. Serves as a negative regulator for innate immune signaling pathways by suppressing RLR-induced activation of IRF3/7 and NF-kappa-B via interaction with adapter ECSIT. Regulates autophagy through modulating both the transcription and the ubiquitination of BECN1. On the one hand, regulates the transcription of BECN1 through negatively modulating the NF-kappa-B pathway. On the other hand, regulates TRAF6-mediated 'Lys-63'-linked ubiquitination of BECN1, thus affecting the formation of the BECN1-PIK3C3 complex. In addition, mediates 'Lys-48'-linked ubiquitination of TRAF6 and thereby promotes TRAF6 proteasomal degradation. Also acts as a critical regulator for early embryo development from blastocyst stage to gastrula through modulating F-actin assembly and WASH1 'Lys-63'-linked ubiquitination. The sequence is that of Tripartite motif-containing protein 59 (Trim59) from Mus musculus (Mouse).